A 163-amino-acid polypeptide reads, in one-letter code: Regulatory protein RecX (163 aa).

Residues 1–21 form a disordered region; it reads MSDAEDIPTGRKRRPREQTPV.

It belongs to the RecX family.

Its subcellular location is the cytoplasm. Its function is as follows. Modulates RecA activity. The sequence is that of Regulatory protein RecX from Stenotrophomonas maltophilia (strain K279a).